The following is an 81-amino-acid chain: Dermaseptin-B2 (81 aa).

The first 22 residues, 1 to 22 (MAFLKKSLFLVLFLGLVSLSIC), serve as a signal peptide directing secretion. Positions 23-43 (EEEKRENEDEEEQEDDEQSEM) are excised as a propeptide. The segment at 24–46 (EEKRENEDEEEQEDDEQSEMKRG) is disordered. Residues 30–40 (EDEEEQEDDEQ) show a composition bias toward acidic residues. Residues 54-55 (VG) are hinge region that separates the two alpha-helices that constitute the peptide. Position 78 is a valine amide (Val-78). The propeptide occupies 80–81 (EQ).

In terms of processing, amidation permits an increased antimicrobial activity against some microorganisms such as T.album and S.cerevisiae. May contain a D-amino acid residue, since the natural peptide is not identical in chromatographic properties to the synthetic peptide. Expressed by the skin glands.

The protein resides in the secreted. It is found in the target cell membrane. In terms of biological role, cationic amphipathic alpha-helical antimicrobial peptide with potent activity against Gram-negative and Gram-positive bacteria, fungi and protozoa. Acts in a synergistic effect in combination with Plasticin-B1 at doses that are not active alone. Acts by disturbing membrane functions. On model membranes, induces a strong perturbation of anionic lipid bilayers, resides at the hydrocarbon core-water interface, parallel to the plane of the membrane, and interacts preferentially with the polar head groups and glycerol backbone region of the anionic phospholipids, as well as the region of the lipid acyl chain near the bilayer surface. Induces a positive curvature of the bilayer and clustering of anionic lipids, consistent with a carpet mechanism, that may lead to the formation of mixed peptide-phospholipid toroidal, transient pores and membrane permeation/disruption once a threshold peptide accumulation is reached. Also enhances binding of agonists to adenosine A1 receptors (ADORA1), adenosine A2a receptors (ADORA2A), alpha-2 adrenergic receptors (ADRA2A) and 5-hydroxytryptamine 1A receptors (HTR1A). In addition, it enhances guanyl nucleotide exchange which may result in the conversion of receptors to a high affinity state complexed with guanyl nucleotide free G-protein. Affects human behavior eliciting profound malaise, followed by listlessness and then euphoria. Does not show cytotoxic activity on CHO cells. Does not act as a chemoattractant. Does not show hemolytic activity. The protein is Dermaseptin-B2 (ADR) of Phyllomedusa bicolor (Two-colored leaf frog).